A 154-amino-acid polypeptide reads, in one-letter code: Small ribosomal subunit protein uS9 (154 aa).

Disordered stretches follow at residues 1–33 (MVPPQRAKNDTSSAPDSAAETRGPLVSSGSGLG) and 115–154 (PENNRKPLKSAGFLTRDSRVKERKKAGLKKARKAPQYSKR). Positions 135 to 154 (KERKKAGLKKARKAPQYSKR) are enriched in basic residues.

This sequence belongs to the universal ribosomal protein uS9 family.

The chain is Small ribosomal subunit protein uS9 from Tropheryma whipplei (strain TW08/27) (Whipple's bacillus).